A 162-amino-acid chain; its full sequence is Transcriptional regulator MraZ (162 aa).

2 SpoVT-AbrB domains span residues 11-62 (EHPS…GLSV) and 98-141 (AVEC…SRDT).

This sequence belongs to the MraZ family. In terms of assembly, forms oligomers.

The protein resides in the cytoplasm. It localises to the nucleoid. In Pelobacter propionicus (strain DSM 2379 / NBRC 103807 / OttBd1), this protein is Transcriptional regulator MraZ.